The following is a 98-amino-acid chain: Lactococcin-A immunity protein (98 aa).

Functionally, imparts immunity to lactococcin-A to naturally sensitive host strains. The polypeptide is Lactococcin-A immunity protein (lciA) (Lactococcus lactis subsp. cremoris (Streptococcus cremoris)).